The sequence spans 334 residues: uncharacterized protein (334 aa).

Ser-126 lines the substrate pocket. Tyr-151 functions as the Proton acceptor in the catalytic mechanism.

This sequence belongs to the NAD(P)-dependent epimerase/dehydratase family. dTDP-glucose dehydratase subfamily.

This is an uncharacterized protein from Escherichia coli O111:H-.